Here is an 883-residue protein sequence, read N- to C-terminus: Translation initiation factor IF-2 (883 aa).

Disordered stretches follow at residues 53–90 and 171–294; these read RSHG…GRSK and EEAA…FERP. Residues 81-90 are compositionally biased toward polar residues; sequence EVTVNSGRSK. Over residues 172–185 the composition is skewed to low complexity; that stretch reads EAAAAAKAAEALAA. Over residues 221-238 the composition is skewed to basic and acidic residues; sequence RSDDRNNRSAPRNERGPG. Over residues 256–265 the composition is skewed to low complexity; that stretch reads GNSNNSNNRG. A tr-type G domain is found at 382–551; sequence QRPPVVTIMG…SVQAELLELK (170 aa). Positions 391–398 are G1; that stretch reads GHVDHGKT. 391–398 contacts GTP; that stretch reads GHVDHGKT. Residues 416–420 form a G2 region; that stretch reads GITQH. Positions 437–440 are G3; it reads DTPG. Residues 437–441 and 491–494 each bind GTP; these read DTPGH and NKID. The tract at residues 491 to 494 is G4; the sequence is NKID. Residues 527-529 are G5; the sequence is SAK.

This sequence belongs to the TRAFAC class translation factor GTPase superfamily. Classic translation factor GTPase family. IF-2 subfamily.

It is found in the cytoplasm. Its function is as follows. One of the essential components for the initiation of protein synthesis. Protects formylmethionyl-tRNA from spontaneous hydrolysis and promotes its binding to the 30S ribosomal subunits. Also involved in the hydrolysis of GTP during the formation of the 70S ribosomal complex. This chain is Translation initiation factor IF-2, found in Stenotrophomonas maltophilia (strain R551-3).